We begin with the raw amino-acid sequence, 388 residues long: Phosphopentomutase (388 aa).

Mn(2+) is bound by residues Asp-11, Asp-283, His-288, Asp-324, His-325, and His-336.

This sequence belongs to the phosphopentomutase family. Mn(2+) is required as a cofactor.

It is found in the cytoplasm. It carries out the reaction 2-deoxy-alpha-D-ribose 1-phosphate = 2-deoxy-D-ribose 5-phosphate. The catalysed reaction is alpha-D-ribose 1-phosphate = D-ribose 5-phosphate. Its pathway is carbohydrate degradation; 2-deoxy-D-ribose 1-phosphate degradation; D-glyceraldehyde 3-phosphate and acetaldehyde from 2-deoxy-alpha-D-ribose 1-phosphate: step 1/2. In terms of biological role, isomerase that catalyzes the conversion of deoxy-ribose 1-phosphate (dRib-1-P) and ribose 1-phosphate (Rib-1-P) to deoxy-ribose 5-phosphate (dRib-5-P) and ribose 5-phosphate (Rib-5-P), respectively. The protein is Phosphopentomutase of Anaeromyxobacter sp. (strain K).